We begin with the raw amino-acid sequence, 483 residues long: Probable glycosyltransferase 6 (483 aa).

The Cytoplasmic segment spans residues 1-40; sequence MAASETAPFGVSAASKGGGGVAGARAQHGQLAVAGRVHDA. A helical; Signal-anchor for type II membrane protein transmembrane segment spans residues 41–61; it reads LVFAAGAVAAVLVLLATASFL. Residues 62 to 483 are Lumenal-facing; the sequence is SPMPVTNLVA…PLPFDYPAAR (422 aa). Asn-144 is a glycosylation site (N-linked (GlcNAc...) asparagine).

The protein belongs to the glycosyltransferase 34 family.

Its subcellular location is the golgi apparatus membrane. Probable glycosyltransferase that may be involved in the biosynthesis of xyloglucan. This Oryza sativa subsp. indica (Rice) protein is Probable glycosyltransferase 6.